We begin with the raw amino-acid sequence, 939 residues long: Valine--tRNA ligase (939 aa).

The 'HIGH' region signature appears at 47–57 (PNVTGILHMGH). Positions 563–567 (KLSKS) match the 'KMSKS' region motif. Residue K566 coordinates ATP. Residues 873 to 939 (AEHLAKEHAR…QSILDKIASL (67 aa)) are a coiled coil.

The protein belongs to the class-I aminoacyl-tRNA synthetase family. ValS type 1 subfamily. As to quaternary structure, monomer.

It localises to the cytoplasm. It carries out the reaction tRNA(Val) + L-valine + ATP = L-valyl-tRNA(Val) + AMP + diphosphate. Functionally, catalyzes the attachment of valine to tRNA(Val). As ValRS can inadvertently accommodate and process structurally similar amino acids such as threonine, to avoid such errors, it has a 'posttransfer' editing activity that hydrolyzes mischarged Thr-tRNA(Val) in a tRNA-dependent manner. The polypeptide is Valine--tRNA ligase (Chlamydia muridarum (strain MoPn / Nigg)).